The primary structure comprises 244 residues: Maintenance of ploidy protein mob2 (244 aa).

The disordered stretch occupies residues 14–45; sequence NRSKRHQNLSDASSSSGSFSKKSSTSQLVRTG. Positions 23–39 are enriched in low complexity; sequence SDASSSSGSFSKKSSTS. Residues serine 46 and serine 48 each carry the phosphoserine modification.

The protein belongs to the MOB1/phocein family. In terms of assembly, interacts with orb6.

It localises to the cytoplasm. Its subcellular location is the cell cortex. Functionally, required for coordinating polarized cell growth during interphase with the onset of mitosis. The polypeptide is Maintenance of ploidy protein mob2 (mob2) (Schizosaccharomyces pombe (strain 972 / ATCC 24843) (Fission yeast)).